We begin with the raw amino-acid sequence, 152 residues long: Small ribosomal subunit protein uS5 (152 aa).

The S5 DRBM domain occupies Phe14 to Val77.

The protein belongs to the universal ribosomal protein uS5 family. In terms of assembly, part of the 30S ribosomal subunit. Contacts proteins S4 and S8.

Its function is as follows. With S4 and S12 plays an important role in translational accuracy. Located at the back of the 30S subunit body where it stabilizes the conformation of the head with respect to the body. This Sulfurovum sp. (strain NBC37-1) protein is Small ribosomal subunit protein uS5.